We begin with the raw amino-acid sequence, 57 residues long: Large ribosomal subunit protein bL32 (57 aa).

The span at 1–19 (MAVPKRRMSRSNTRSRRSQ) shows a compositional bias: basic residues. Residues 1–22 (MAVPKRRMSRSNTRSRRSQWKA) are disordered.

It belongs to the bacterial ribosomal protein bL32 family.

The chain is Large ribosomal subunit protein bL32 from Rhodococcus jostii (strain RHA1).